A 359-amino-acid polypeptide reads, in one-letter code: Opine dehydrogenase (359 aa).

This sequence belongs to the lysopine/nopaline/octopine/opine/vitopine dehydrogenases family. In terms of assembly, homodimer.

It carries out the reaction (2S)-2-[(R)-1-carboxyethylamino]pentanoate + NAD(+) + H2O = L-2-aminopentanoate + pyruvate + NADH + H(+). In terms of biological role, in the forward direction also acts on secondary amine dicarboxylates such as N-(1-carboxyethyl)methionine and N-(1-carboxyethyl)phenylalanine. In the reverse direction, the enzyme also acts on neutral amino acids as an amino donor. They include L-amino acids such as 2-aminopentanoic acid, 2-aminobutyric acid, 2-aminohexanoic acid, 3-chloroalanine, O-acetylserine, methionine, isoleucine, valine, phenylalanine, leucine and alanine. This is Opine dehydrogenase (odh) from Arthrobacter sp. (strain 1C).